Consider the following 119-residue polypeptide: RNA guanine-N7 methyltransferase activating subunit (119 aa).

The interaction with RNMT stretch occupies residues 1 to 55 (MSDTSEEIPNFEEMFASRFTKDDKEYQEYLKRPPESPPIVEEWNSRAGGNQRNRG). The segment at 30-119 (LKRPPESPPI…HNQRPPYGYY (90 aa)) is disordered. A Phosphoserine modification is found at Ser36. An RNMT-activating domain motif is present at residues 36 to 42 (SPPIVEE). Polar residues predominate over residues 47-61 (AGGNQRNRGNWLQDN). The interval 56-119 (NWLQDNRQFR…HNQRPPYGYY (64 aa)) is RNA-binding. The span at 62–73 (RQFRGRDNRRGW) shows a compositional bias: basic and acidic residues. At Arg85 the chain carries Omega-N-methylarginine. The residue at position 86 (Ser86) is a Phosphoserine. The segment covering 89-112 (NNNYPQQRPEPYYQQQYTQYGHNQ) has biased composition (low complexity).

The protein belongs to the RAM family. In terms of assembly, interacts with RNMT; this interaction enhances mRNA binding and cap methyltransferase activity.

The protein resides in the nucleus. Its function is as follows. Regulatory subunit of the mRNA-capping methyltransferase RNMT:RAMAC complex that methylates the N7 position of the added guanosine to the 5'-cap structure of mRNAs. Promotes the recruitment of the methyl donor, S-adenosyl-L-methionine, to RNMT. Regulates RNMT expression by a post-transcriptional stabilizing mechanism. Binds RNA. This Mus musculus (Mouse) protein is RNA guanine-N7 methyltransferase activating subunit (Ramac).